A 929-amino-acid chain; its full sequence is uncharacterized protein (929 aa).

The segment at Met-1 to Ser-257 is disordered. Over residues Lys-23–Glu-34 the composition is skewed to basic and acidic residues. Acidic residues-rich tracts occupy residues Glu-35 to Glu-50, Ser-59 to Asp-75, Leu-107 to Val-117, Asp-133 to Leu-144, and Ser-188 to Asn-220. 3 positions are modified to phosphoserine: Ser-251, Ser-555, and Ser-557. The segment at Asp-602–Lys-729 is disordered. Residues Gln-605–Asp-619 are compositionally biased toward acidic residues. The segment covering Asn-670–Ala-681 has biased composition (basic and acidic residues). Polar residues predominate over residues Glu-696–Ala-711. Basic and acidic residues predominate over residues Lys-712–Lys-729. 3 positions are modified to phosphoserine: Ser-758, Ser-760, and Ser-764. The segment covering Lys-805 to Ser-820 has biased composition (basic and acidic residues). The segment at Lys-805 to Lys-843 is disordered. Positions Lys-833–Lys-843 are enriched in basic residues.

This sequence to yeast YML093w.

Its subcellular location is the nucleus. It localises to the nucleolus. This is an uncharacterized protein from Schizosaccharomyces pombe (strain 972 / ATCC 24843) (Fission yeast).